Consider the following 325-residue polypeptide: Protein FAM50B (325 aa).

Position 2 is an N-acetylalanine (Ala-2). The disordered stretch occupies residues 137-160; the sequence is RRAGNLGKNPDVDTSFLPDRDREE.

Belongs to the FAM50 family.

This chain is Protein FAM50B (FAM50B), found in Macaca fascicularis (Crab-eating macaque).